A 954-amino-acid polypeptide reads, in one-letter code: MTTPTEFHFTDYQPYDFANRRHIGPSPSEMAEMLKVVGYKSLDALIDATVPSSIRQKVPLTWGAALTEREALDRLRETANKNQVLTSLIGQGYYGTITPPVIQRNILENPAWYTAYTPYQPEISQGRLEALLNYQTMVCDLTGLDVANASLLDEATAAAEAMAMCQRVAKSKATAFFVDANCHPQTIALIETRAAPLGWKVIIGNPFTDLDPVDVFGAIFQYPGTHGHVSDFTGLISRLHQTGAIAAVAADLLALTLLKSPGEMGADIAIGTSQRFGVPVGYGGPHAAYMSVKDAHKRSMPGRLVGVSVDARGNRAYRLSLQTREQHIRREKATSNICTAQVLLAVMASMYGVFHGPQGIKAIAQQTHQKAVLMAKGLEKLGYTIEPETFFDTITVEVGHMQGVILRSAVAEGVNLRKVGATKIGMSLDERTRPATLEAVWRAFGGNFSISDFEPDYRLPKDLLRTSQYMTHPIFHMNRAESEMTRYIRRLSDRDLALDRSMIPLGSCTMKLNATAEMLPITWPEFSDIHPFVPANQALGYKEMIDDLSEKLCSVTGYDAFSMQPNSGAQGEYAGLLTIRNYHLANGGTHRDVCLIPTSAHGTNPASAQMVGMKVVPVKVRDNGDIDIDDFRLKAEQYAENLSCCMITYPSTHGVFEETVREICEITHKHGGQVYLDGANMNAMVGLARPGDIGSDVSHLNLHKTFCIPHGGGGPGMGPIGVKAHLAPFLPGHPTTDGREGAVSAAPFGSPSILPISWSYCLMMGGEGLTQATKVAILNANYIAERLKGAYDVLYKSETGRVAHECIIDTRPLADSCGVTVDDVAKRLIDCGFHAPTMSWPVAGTLMIEPTESETKAEIDRFCDAMLAIREEARDIEEGRADKNNNPLKNAPHTVEDLVGEWDRPYSREKGCFPPGAFRIDKYWSPVNRIDNVYGDRNLICTCPPMEAYAEAAE.

Position 704 is an N6-(pyridoxal phosphate)lysine (lysine 704).

Belongs to the GcvP family. As to quaternary structure, the glycine cleavage system is composed of four proteins: P, T, L and H. Requires pyridoxal 5'-phosphate as cofactor.

The catalysed reaction is N(6)-[(R)-lipoyl]-L-lysyl-[glycine-cleavage complex H protein] + glycine + H(+) = N(6)-[(R)-S(8)-aminomethyldihydrolipoyl]-L-lysyl-[glycine-cleavage complex H protein] + CO2. Its function is as follows. The glycine cleavage system catalyzes the degradation of glycine. The P protein binds the alpha-amino group of glycine through its pyridoxal phosphate cofactor; CO(2) is released and the remaining methylamine moiety is then transferred to the lipoamide cofactor of the H protein. The sequence is that of Glycine dehydrogenase (decarboxylating) from Agrobacterium fabrum (strain C58 / ATCC 33970) (Agrobacterium tumefaciens (strain C58)).